Reading from the N-terminus, the 40-residue chain is Photosystem II reaction center protein J (40 aa).

The helical transmembrane segment at 10 to 30 threads the bilayer; that stretch reads LWLVGTVAGTLVIGLLGVFFY.

This sequence belongs to the PsbJ family. In terms of assembly, PSII is composed of 1 copy each of membrane proteins PsbA, PsbB, PsbC, PsbD, PsbE, PsbF, PsbH, PsbI, PsbJ, PsbK, PsbL, PsbM, PsbT, PsbX, PsbY, PsbZ, Psb30/Ycf12, at least 3 peripheral proteins of the oxygen-evolving complex and a large number of cofactors. It forms dimeric complexes.

Its subcellular location is the plastid. It is found in the chloroplast thylakoid membrane. Its function is as follows. One of the components of the core complex of photosystem II (PSII). PSII is a light-driven water:plastoquinone oxidoreductase that uses light energy to abstract electrons from H(2)O, generating O(2) and a proton gradient subsequently used for ATP formation. It consists of a core antenna complex that captures photons, and an electron transfer chain that converts photonic excitation into a charge separation. The protein is Photosystem II reaction center protein J of Adiantum capillus-veneris (Maidenhair fern).